The following is a 466-amino-acid chain: Methylenetetrahydrofolate--tRNA-(uracil-5-)-methyltransferase TrmFO (466 aa).

An FAD-binding site is contributed by 16–21 (GGGMAG).

This sequence belongs to the MnmG family. TrmFO subfamily. The cofactor is FAD.

The protein resides in the cytoplasm. It catalyses the reaction uridine(54) in tRNA + (6R)-5,10-methylene-5,6,7,8-tetrahydrofolate + NADH + H(+) = 5-methyluridine(54) in tRNA + (6S)-5,6,7,8-tetrahydrofolate + NAD(+). The enzyme catalyses uridine(54) in tRNA + (6R)-5,10-methylene-5,6,7,8-tetrahydrofolate + NADPH + H(+) = 5-methyluridine(54) in tRNA + (6S)-5,6,7,8-tetrahydrofolate + NADP(+). Its function is as follows. Catalyzes the folate-dependent formation of 5-methyl-uridine at position 54 (M-5-U54) in all tRNAs. This chain is Methylenetetrahydrofolate--tRNA-(uracil-5-)-methyltransferase TrmFO, found in Maricaulis maris (strain MCS10) (Caulobacter maris).